Reading from the N-terminus, the 261-residue chain is Undecaprenyl-diphosphatase (261 aa).

The next 8 helical transmembrane spans lie at 16 to 36, 40 to 60, 82 to 102, 107 to 127, 140 to 160, 183 to 203, 211 to 231, and 239 to 259; these read TEFL…LFGF, GLVF…VYFW, FWFL…LEDI, LRAP…LYLA, IRFG…IPGV, FSFL…MLKM, SFVL…WFLI, and FNIF…IALL.

The protein belongs to the UppP family.

It is found in the cell membrane. The enzyme catalyses di-trans,octa-cis-undecaprenyl diphosphate + H2O = di-trans,octa-cis-undecaprenyl phosphate + phosphate + H(+). Functionally, catalyzes the dephosphorylation of undecaprenyl diphosphate (UPP). Confers resistance to bacitracin. This chain is Undecaprenyl-diphosphatase, found in Desulforudis audaxviator (strain MP104C).